The chain runs to 522 residues: Neutral amino acid uniporter 4 (522 aa).

10 helical membrane passes run 115 to 135, 181 to 201, 226 to 246, 255 to 275, 293 to 313, 329 to 349, 377 to 397, 409 to 429, 435 to 455, and 467 to 487; these read AGVL…IHCM, LVDW…FVFL, SLDL…LVFI, LSFF…QYVI, YPLF…VLPL, IGMA…YFCF, FGIY…ILPA, LCEF…AVLI, VISF…PPLV, and PWVI…FIAG. N515 carries an N-linked (GlcNAc...) asparagine glycan.

It belongs to the amino acid/polyamine transporter 2 family.

It localises to the lysosome membrane. The enzyme catalyses L-tryptophan(in) = L-tryptophan(out). It carries out the reaction L-alanine(in) = L-alanine(out). It catalyses the reaction L-proline(in) = L-proline(out). Uniporter that mediates the transport of neutral amino acids like L-tryptophan, proline and alanine. The transport activity is sodium ions-independent, electroneutral and therefore functions via facilitated diffusion. This Xenopus laevis (African clawed frog) protein is Neutral amino acid uniporter 4.